A 124-amino-acid chain; its full sequence is Large ribosomal subunit protein bL12 (124 aa).

This sequence belongs to the bacterial ribosomal protein bL12 family. Homodimer. Part of the ribosomal stalk of the 50S ribosomal subunit. Forms a multimeric L10(L12)X complex, where L10 forms an elongated spine to which 2 to 4 L12 dimers bind in a sequential fashion. Binds GTP-bound translation factors.

Forms part of the ribosomal stalk which helps the ribosome interact with GTP-bound translation factors. Is thus essential for accurate translation. This chain is Large ribosomal subunit protein bL12, found in Bacteroides thetaiotaomicron (strain ATCC 29148 / DSM 2079 / JCM 5827 / CCUG 10774 / NCTC 10582 / VPI-5482 / E50).